A 596-amino-acid polypeptide reads, in one-letter code: MSTSNDPVVSSHDPIKQEKEQETDLEAQVEHKKRNERGNAFVGFLILIFVYYLLRGGSNDNDKQEMSHSPGSCMDSESAAVSTSAKCYIPPVLTPAKEPKLGDDVSGIDYIRSPEFFNDSLVRFQELLRIPTVCYDDMGDVGDDDRFDIFAVFQDKVRELYPNIFKKLKVEYVNTYGLLITLEGSNKDLKPLVLMGHQDVVPVNQASLDRWYFPPFSATYHNGHVYSRGAADDKNSVVAILEALEILAISDYKPEQTVIASFGFDEEVSGYRGALPLAHKLYERYGKDGVALILDEGGFTINLFGTLFATVCVAEKGYMDVHLKLKTPGGHASIPPPHTNIGLMSKLVTQIEEPFGGELTFENPFYTTLQCFAENSADMDDNLRQLIKSGDTEKMTDLFSKSRLYRYFFETSIAVDVINGGVKVNALPEETTLAVNHRVDASKGLKQVYDRYGGLLEEFGHEYHVNVTLFNGETVVEYEDAIGHIFASTAKTLEPSPVSPYDESSDAYKKLAGAIRYTFGDGTSVTPALMPANTDTRHYWNLTSNIYRWTPVSTNSTSKNSFNGHTINENMRYDAHMDSIEFFYNFILVSDSGEEA.

The disordered stretch occupies residues 1–31 (MSTSNDPVVSSHDPIKQEKEQETDLEAQVEH). The Cytoplasmic segment spans residues 1 to 37 (MSTSNDPVVSSHDPIKQEKEQETDLEAQVEHKKRNER). The span at 13–22 (DPIKQEKEQE) shows a compositional bias: basic and acidic residues. Residues 38-58 (GNAFVGFLILIFVYYLLRGGS) form a helical membrane-spanning segment. The Lumenal segment spans residues 59–596 (NDNDKQEMSH…ILVSDSGEEA (538 aa)). N-linked (GlcNAc...) asparagine glycosylation is present at Asn-118. Zn(2+) is bound at residue His-197. Residue Asp-199 is part of the active site. Asp-232 contributes to the Zn(2+) binding site. The Proton acceptor role is filled by Glu-266. Residues Glu-267 and Asp-295 each contribute to the Zn(2+) site. 3 N-linked (GlcNAc...) asparagine glycosylation sites follow: Asn-466, Asn-541, and Asn-555. Position 565 (His-565) interacts with Zn(2+).

This sequence belongs to the peptidase M20A family. Zn(2+) is required as a cofactor.

It localises to the vacuole membrane. This is an uncharacterized protein from Schizosaccharomyces pombe (strain 972 / ATCC 24843) (Fission yeast).